The primary structure comprises 179 residues: Large ribosomal subunit protein uL5 (179 aa).

Belongs to the universal ribosomal protein uL5 family. In terms of assembly, part of the 50S ribosomal subunit; part of the 5S rRNA/L5/L18/L25 subcomplex. Contacts the 5S rRNA and the P site tRNA. Forms a bridge to the 30S subunit in the 70S ribosome.

Functionally, this is one of the proteins that bind and probably mediate the attachment of the 5S RNA into the large ribosomal subunit, where it forms part of the central protuberance. In the 70S ribosome it contacts protein S13 of the 30S subunit (bridge B1b), connecting the 2 subunits; this bridge is implicated in subunit movement. Contacts the P site tRNA; the 5S rRNA and some of its associated proteins might help stabilize positioning of ribosome-bound tRNAs. This is Large ribosomal subunit protein uL5 from Halothermothrix orenii (strain H 168 / OCM 544 / DSM 9562).